Reading from the N-terminus, the 129-residue chain is uncharacterized protein (129 aa).

2 helical membrane passes run 4 to 24 (FKFL…ILII) and 37 to 57 (VISL…DLSI).

It to B.burgdorferi BBF20.

Its subcellular location is the cell membrane. This is an uncharacterized protein from Borreliella burgdorferi (strain ATCC 35210 / DSM 4680 / CIP 102532 / B31) (Borrelia burgdorferi).